Here is a 295-residue protein sequence, read N- to C-terminus: MDMSSIASRLGLSGSRPVVRKAAELRRLCDVTFDSSVLGIGEVCKAIICLEIAASKFQVIFDRAEAVRMSGMSEKAYIRSFNALQNGLGVKTTLDVRELGIQFGCVRLIPFVQKGLSLYKERFLAALPPSRRASTDFGRPVFTAAAFYLCAKRHKLKVDKLKLIDLCGTSSSEFTTVSTSMADLCFDVFGIAKEKKDAKSIKGSRELLDVLPSKRKHDDDSDSSGESSGDDQDELDLPTYKRHKKMEKEAYNDWKSSVLSNKQTKPDPAKPRKQAQLNFKKKPSDMALEVSSAAN.

Positions 212–295 (PSKRKHDDDS…MALEVSSAAN (84 aa)) are disordered. The span at 220 to 236 (DSDSSGESSGDDQDELD) shows a compositional bias: acidic residues. Positions 254–263 (WKSSVLSNKQ) are enriched in polar residues.

Belongs to the ORC6 family. In terms of assembly, component of the origin recognition complex (ORC) composed of at least ORC1, ORC2, ORC3, ORC4, ORC5 and ORC6. ORC is regulated in a cell-cycle and development dependent manner. It is sequentially assembled at the exit from anaphase of mitosis and disassembled as cells enter S phase.

Its subcellular location is the nucleus. Its function is as follows. Component of the origin recognition complex (ORC) that binds origins of replication. DNA-binding is ATP-dependent. The specific DNA sequences that define origins of replication have not been identified yet. ORC is required to assemble the pre-replication complex necessary to initiate DNA replication. In Oryza sativa subsp. japonica (Rice), this protein is Origin of replication complex subunit 6.